Here is a 570-residue protein sequence, read N- to C-terminus: Arginine--tRNA ligase (570 aa).

A 'HIGH' region motif is present at residues Ala-127 to His-137.

This sequence belongs to the class-I aminoacyl-tRNA synthetase family. In terms of assembly, monomer.

The protein localises to the cytoplasm. It carries out the reaction tRNA(Arg) + L-arginine + ATP = L-arginyl-tRNA(Arg) + AMP + diphosphate. This chain is Arginine--tRNA ligase, found in Neorickettsia sennetsu (strain ATCC VR-367 / Miyayama) (Ehrlichia sennetsu).